Here is a 275-residue protein sequence, read N- to C-terminus: Type III pantothenate kinase (275 aa).

9 to 16 (DIGNTRLK) contributes to the ATP binding site. Substrate-binding positions include tyrosine 114 and 121 to 124 (GVDR). Catalysis depends on aspartate 123, which acts as the Proton acceptor. Threonine 147 provides a ligand contact to ATP. Threonine 209 contributes to the substrate binding site.

This sequence belongs to the type III pantothenate kinase family. In terms of assembly, homodimer. NH4(+) is required as a cofactor. The cofactor is K(+).

Its subcellular location is the cytoplasm. The catalysed reaction is (R)-pantothenate + ATP = (R)-4'-phosphopantothenate + ADP + H(+). It functions in the pathway cofactor biosynthesis; coenzyme A biosynthesis; CoA from (R)-pantothenate: step 1/5. Its function is as follows. Catalyzes the phosphorylation of pantothenate (Pan), the first step in CoA biosynthesis. The protein is Type III pantothenate kinase of Cupriavidus pinatubonensis (strain JMP 134 / LMG 1197) (Cupriavidus necator (strain JMP 134)).